We begin with the raw amino-acid sequence, 198 residues long: Inner membrane-spanning protein YciB (198 aa).

A run of 5 helical transmembrane segments spans residues 36–56 (IYSA…ALFL), 64–84 (GQLL…AFHS), 90–110 (WKAP…HFIG), 135–155 (VAWI…AFTF), and 162–182 (FKVF…GVYL).

This sequence belongs to the YciB family.

It is found in the cell inner membrane. In terms of biological role, plays a role in cell envelope biogenesis, maintenance of cell envelope integrity and membrane homeostasis. The protein is Inner membrane-spanning protein YciB of Pseudomonas entomophila (strain L48).